Consider the following 30-residue polypeptide: Rothein 3.4 (30 aa).

Leu30 carries the post-translational modification Leucine amide.

The protein belongs to the frog skin active peptide (FSAP) family. Rothein subfamily. In terms of tissue distribution, expressed by the skin dorsal glands.

It is found in the secreted. In terms of biological role, lacks antimicrobial activity. Does not inhibit the formation of NO by neuronal nitric oxide. The protein is Rothein 3.4 of Litoria rothii (Roth's tree frog).